We begin with the raw amino-acid sequence, 501 residues long: Glutamate--tRNA ligase (501 aa).

The 'HIGH' region signature appears at 11-21 (PSPTGPLHIGG). A 'KMSKS' region motif is present at residues 260-264 (KLSKR). Lysine 263 serves as a coordination point for ATP.

It belongs to the class-I aminoacyl-tRNA synthetase family. Glutamate--tRNA ligase type 1 subfamily. Monomer.

Its subcellular location is the cytoplasm. The catalysed reaction is tRNA(Glu) + L-glutamate + ATP = L-glutamyl-tRNA(Glu) + AMP + diphosphate. Functionally, catalyzes the attachment of glutamate to tRNA(Glu) in a two-step reaction: glutamate is first activated by ATP to form Glu-AMP and then transferred to the acceptor end of tRNA(Glu). This chain is Glutamate--tRNA ligase, found in Flavobacterium johnsoniae (strain ATCC 17061 / DSM 2064 / JCM 8514 / BCRC 14874 / CCUG 350202 / NBRC 14942 / NCIMB 11054 / UW101) (Cytophaga johnsonae).